The primary structure comprises 255 residues: Proteasome subunit alpha (255 aa).

The interval 228 to 255 (LLASPAGTSGPTGEPGPAGTAATDGGDL) is disordered. A compositionally biased stretch (low complexity) spans 232–255 (PAGTSGPTGEPGPAGTAATDGGDL).

This sequence belongs to the peptidase T1A family. In terms of assembly, the 20S proteasome core is composed of 14 alpha and 14 beta subunits that assemble into four stacked heptameric rings, resulting in a barrel-shaped structure. The two inner rings, each composed of seven catalytic beta subunits, are sandwiched by two outer rings, each composed of seven alpha subunits. The catalytic chamber with the active sites is on the inside of the barrel. Has a gated structure, the ends of the cylinder being occluded by the N-termini of the alpha-subunits. Is capped by the proteasome-associated ATPase, ARC.

The protein resides in the cytoplasm. It functions in the pathway protein degradation; proteasomal Pup-dependent pathway. With respect to regulation, the formation of the proteasomal ATPase ARC-20S proteasome complex, likely via the docking of the C-termini of ARC into the intersubunit pockets in the alpha-rings, may trigger opening of the gate for substrate entry. Interconversion between the open-gate and close-gate conformations leads to a dynamic regulation of the 20S proteasome proteolysis activity. Component of the proteasome core, a large protease complex with broad specificity involved in protein degradation. This Sanguibacter keddieii (strain ATCC 51767 / DSM 10542 / NCFB 3025 / ST-74) protein is Proteasome subunit alpha.